The following is a 681-amino-acid chain: Envelope glycoprotein (681 aa).

A signal peptide spans 1–18; sequence MKTTCLLISLILIQGVKT. Over 19–648 the chain is Extracellular; the sequence is LPILEIASNI…GLGGKWWTSD (630 aa). Positions 38–188 are receptor-binding; the sequence is SGTLQKTEDV…FSRQGQGYRH (151 aa). 8 N-linked (GlcNAc...) asparagine; by host glycosylation sites follow: N94, N171, N190, N202, N207, N219, N223, and N255. The disordered stretch occupies residues 222-424; sequence KNQTCAPSKK…TSPSPTPNST (203 aa). 3 stretches are compositionally biased toward polar residues: residues 244 to 259, 278 to 290, and 308 to 331; these read LTST…TTDP, PYTT…KQGL, and GGNN…TAQP. A mucin-like region region spans residues 277 to 455; sequence EPYTTSDAAT…PFLDGLINAP (179 aa). N-linked (GlcNAc...) asparagine; by host glycosylation is found at N310, N313, N326, N337, N344, N345, N350, N360, N397, N408, N422, and N487. Residues 337-347 are compositionally biased toward low complexity; sequence NTTTISTNNTS. Over residues 348 to 388 the composition is skewed to polar residues; sequence KHNLSTPSVPIQNATNYNTQSTAPENEQTSAPSKTTLLPTE. A compositionally biased stretch (low complexity) spans 389–424; it reads NPTTAKSTNSTKSPTTTVPNTTNKYSTSPSPTPNST. The fusion peptide stretch occupies residues 529–549; the sequence is GLSWIPFFGPGIEGLYTAGLI. N-linked (GlcNAc...) asparagine; by host glycosylation is found at N564 and N619. The chain crosses the membrane as a helical span at residues 649–669; the sequence is WGVLTNLGILLLLSIAVLIAL. The Cytoplasmic segment spans residues 670-681; the sequence is SCICRIFTKYIG. Residues C671 and C673 are each lipidated (S-palmitoyl cysteine; by host).

Belongs to the filoviruses glycoprotein family. Homotrimer; each monomer consists of a GP1 and a GP2 subunit linked by disulfide bonds. The resulting peplomers (GP1,2) protrude from the virus surface as spikes. GP1,2 interacts with human CD209 and CLEC4M (collectively referred to as DC-SIGN(R)). Asialoglycoprotein receptor (ASGP-R) may be a liver-specific receptor for GP1,2. Members of the Tyro3 receptor tyrosine kinase family may be cell entry factors interacting with GP1,2. Post-translationally, N-glycosylated. O-glycosylated in the mucin-like region. In terms of processing, specific enzymatic cleavages in vivo yield mature proteins. The precursor is processed into GP1 and GP2 by host cell furin in the trans Golgi, and maybe by other host proteases, to yield the mature GP1 and GP2 proteins. The cleavage site corresponds to the furin optimal cleavage sequence [KR]-X-[KR]-R. Post-translationally, GP1 is phosphorylated on serine residues between residues 260 and 273.

The protein resides in the virion membrane. The protein localises to the host cell membrane. GP1 is responsible for binding to the receptor(s) on target cells. Interacts with CD209/DC-SIGN and CLEC4M/DC-SIGNR which act as cofactors for virus entry into the host cell. Binding to CD209 and CLEC4M, which are respectively found on dendritic cells (DCs), and on endothelial cells of liver sinusoids and lymph node sinuses, facilitate infection of macrophages and endothelial cells. These interactions not only facilitate virus cell entry, but also allow capture of viral particles by DCs and subsequent transmission to susceptible cells without DCs infection (trans infection). Its function is as follows. GP2 acts as a class I viral fusion protein. Under the current model, the protein has at least 3 conformational states: pre-fusion native state, pre-hairpin intermediate state, and post-fusion hairpin state. During viral and target cell membrane fusion, the coiled coil regions (heptad repeats) assume a trimer-of-hairpins structure, positioning the fusion peptide in close proximity to the C-terminal region of the ectodomain. The formation of this structure appears to drive apposition and subsequent fusion of viral and target cell membranes. Responsible for penetration of the virus into the cell cytoplasm by mediating the fusion of the membrane of the endocytosed virus particle with the endosomal membrane. Low pH in endosomes induces an irreversible conformational change in GP2, releasing the fusion hydrophobic peptide. This is Envelope glycoprotein (GP) from Chlorocebus aethiops (Green monkey).